The chain runs to 449 residues: MMLSTEGREGFVVKVRGLPWSCSAEEVMRFFSDCKIQNGTSGVRFIYTREGRPSGEAFVELESEDEVKLALKKDRETMGHRYVEVFKSNSVEMDWVLKHTGPNSPDTANDGFVRLRGLPFGCSKEEIVQFFSGLEIVPNGMTLPVDFQGRSTGEAFVQFASQEIAEKALKKHKERIGHRYIEIFKSSRAEVRTHYDPPRKLMTMQRPGPYDRPGAGRGYNSIGRGAGFERMRRGAYGGGYGGYDDYGGYNDGYGFGSDRFGRDLNYCFSGMSDHRYGDGGSSFQSTTGHCVHMRGLPYRATENDIYNFFSPLNPMRVHIEIGPDGRVTGEADVEFATHEDAVAAMAKDKANMQHRYVELFLNSTAGTSGGAYDHSYVELFLNSTAGASGGAYGSQMMGGMGLSNQSSYGGPASQQLSAGYGGGYGGQSSMSGYDQVLQENSSDYQSNLA.

Met1 carries the post-translational modification N-acetylmethionine. The residue at position 2 (Met2) is an N-acetylmethionine; in Heterogeneous nuclear ribonucleoprotein H2, N-terminally processed. Residues Phe11 to Ser90 form the RRM 1 domain. Ser23 is subject to Phosphoserine. A Glycyl lysine isopeptide (Lys-Gly) (interchain with G-Cter in SUMO2) cross-link involves residue Lys35. Phosphoserine occurs at positions 54 and 63. Lys87 is covalently cross-linked (Glycyl lysine isopeptide (Lys-Gly) (interchain with G-Cter in SUMO2)). Ser90 is modified (phosphoserine). Lys98 participates in a covalent cross-link: Glycyl lysine isopeptide (Lys-Gly) (interchain with G-Cter in SUMO2). An RRM 2 domain is found at Gly111–Arg188. Arg233 carries the dimethylated arginine; alternate modification. Arg233 is subject to Omega-N-methylarginine; alternate. One copy of the 1-1 repeat lies at Gly234–Tyr249. Positions Gly234–Tyr433 are 2 X 16 AA Gly-rich approximate repeats. Tyr246 carries the phosphotyrosine modification. An RRM 3 domain is found at His289 to Thr364. Ser310 is subject to Phosphoserine. Repeat copies occupy residues His354–Tyr372, His374–Tyr392, and Ala418–Tyr433. The interval His354 to Tyr392 is 2 X 19 AA perfect repeats.

In terms of assembly, component of a ribonucleoprotein complex containing mRNAs and RNA-binding proteins including DDX5, HNRNPH2 and SRSF1 as well as splicing regulator ARVCF. Interacts with TXNL4/DIM1.

The protein resides in the nucleus. The protein localises to the nucleoplasm. Its function is as follows. This protein is a component of the heterogeneous nuclear ribonucleoprotein (hnRNP) complexes which provide the substrate for the processing events that pre-mRNAs undergo before becoming functional, translatable mRNAs in the cytoplasm. Binds poly(RG). The sequence is that of Heterogeneous nuclear ribonucleoprotein H2 (Hnrnph2) from Rattus norvegicus (Rat).